Consider the following 181-residue polypeptide: NADH-quinone oxidoreductase subunit 2 (181 aa).

Cys-83, Ser-87, Cys-88, Cys-124, and Cys-128 together coordinate [2Fe-2S] cluster. Cys-144 and Cys-172 are disulfide-bonded.

This sequence belongs to the complex I 24 kDa subunit family. NDH-1 is composed of 15 different subunits, Nqo1 to Nqo15. The complex has a L-shaped structure, with the hydrophobic arm (subunits Nqo7, Nqo8 and Nqo10 to Nqo14) embedded in the membrane and the hydrophilic peripheral arm (subunits Nqo1 to Nqo6, Nqo9 and Nqo15) protruding into the bacterial cytoplasm. The hydrophilic domain contains all the redox centers. [2Fe-2S] cluster is required as a cofactor.

The protein localises to the cell membrane. It carries out the reaction a quinone + NADH + 5 H(+)(in) = a quinol + NAD(+) + 4 H(+)(out). In terms of biological role, NDH-1 shuttles electrons from NADH, via FMN and iron-sulfur (Fe-S) centers, to quinones in the respiratory chain. The immediate electron acceptor for the enzyme in this species is menaquinone. Couples the redox reaction to proton translocation (for every two electrons transferred, four hydrogen ions are translocated across the cytoplasmic membrane), and thus conserves the redox energy in a proton gradient required for the synthesis of ATP. This chain is NADH-quinone oxidoreductase subunit 2 (nqo2), found in Thermus thermophilus (strain ATCC 27634 / DSM 579 / HB8).